Here is a 125-residue protein sequence, read N- to C-terminus: MIYGTGVDIVDISRFQRFVSENNTSLLQRVFTPRELEYCSGKKHSAQHFALRFAAKEAFLKALGTGLRGGVSWQHMEIVNDRLGKPEMLLTGKAGELFAEAGLQKIFLSLSHDGNMAVAMLVLEK.

Mg(2+)-binding residues include D8 and E57.

Belongs to the P-Pant transferase superfamily. AcpS family. It depends on Mg(2+) as a cofactor.

It is found in the cytoplasm. The enzyme catalyses apo-[ACP] + CoA = holo-[ACP] + adenosine 3',5'-bisphosphate + H(+). Transfers the 4'-phosphopantetheine moiety from coenzyme A to a Ser of acyl-carrier-protein. The protein is Holo-[acyl-carrier-protein] synthase of Geotalea daltonii (strain DSM 22248 / JCM 15807 / FRC-32) (Geobacter daltonii).